Here is a 102-residue protein sequence, read N- to C-terminus: Large ribosomal subunit protein bL21 (102 aa).

It belongs to the bacterial ribosomal protein bL21 family. In terms of assembly, part of the 50S ribosomal subunit. Contacts protein L20.

Its function is as follows. This protein binds to 23S rRNA in the presence of protein L20. The sequence is that of Large ribosomal subunit protein bL21 from Azorhizobium caulinodans (strain ATCC 43989 / DSM 5975 / JCM 20966 / LMG 6465 / NBRC 14845 / NCIMB 13405 / ORS 571).